We begin with the raw amino-acid sequence, 477 residues long: Aspartyl/glutamyl-tRNA(Asn/Gln) amidotransferase subunit B (477 aa).

Belongs to the GatB/GatE family. GatB subfamily. As to quaternary structure, heterotrimer of A, B and C subunits.

It carries out the reaction L-glutamyl-tRNA(Gln) + L-glutamine + ATP + H2O = L-glutaminyl-tRNA(Gln) + L-glutamate + ADP + phosphate + H(+). It catalyses the reaction L-aspartyl-tRNA(Asn) + L-glutamine + ATP + H2O = L-asparaginyl-tRNA(Asn) + L-glutamate + ADP + phosphate + 2 H(+). Its function is as follows. Allows the formation of correctly charged Asn-tRNA(Asn) or Gln-tRNA(Gln) through the transamidation of misacylated Asp-tRNA(Asn) or Glu-tRNA(Gln) in organisms which lack either or both of asparaginyl-tRNA or glutaminyl-tRNA synthetases. The reaction takes place in the presence of glutamine and ATP through an activated phospho-Asp-tRNA(Asn) or phospho-Glu-tRNA(Gln). The sequence is that of Aspartyl/glutamyl-tRNA(Asn/Gln) amidotransferase subunit B from Coxiella burnetii (strain CbuG_Q212) (Coxiella burnetii (strain Q212)).